Reading from the N-terminus, the 950-residue chain is Protein translocase subunit SecA (950 aa).

ATP-binding positions include Gln-87, 105–109 (GEGKT), and Asp-524. The tract at residues 908–932 (GAAPVPAEARNPNDPSTWGKVGRNE) is disordered. Zn(2+)-binding residues include Cys-934, Cys-936, Cys-945, and His-946.

It belongs to the SecA family. Monomer and homodimer. Part of the essential Sec protein translocation apparatus which comprises SecA, SecYEG and auxiliary proteins SecDF-YajC and YidC. The cofactor is Zn(2+).

It localises to the cell inner membrane. Its subcellular location is the cytoplasm. It carries out the reaction ATP + H2O + cellular proteinSide 1 = ADP + phosphate + cellular proteinSide 2.. In terms of biological role, part of the Sec protein translocase complex. Interacts with the SecYEG preprotein conducting channel. Has a central role in coupling the hydrolysis of ATP to the transfer of proteins into and across the cell membrane, serving both as a receptor for the preprotein-SecB complex and as an ATP-driven molecular motor driving the stepwise translocation of polypeptide chains across the membrane. The protein is Protein translocase subunit SecA of Bradyrhizobium sp. (strain BTAi1 / ATCC BAA-1182).